The primary structure comprises 121 residues: Small ribosomal subunit protein uS13 (121 aa).

The interval 93–121 (RGLPMRGQRTRTNARTRKGPRKSAAALKK) is disordered.

The protein belongs to the universal ribosomal protein uS13 family. As to quaternary structure, part of the 30S ribosomal subunit. Forms a loose heterodimer with protein S19. Forms two bridges to the 50S subunit in the 70S ribosome.

Located at the top of the head of the 30S subunit, it contacts several helices of the 16S rRNA. In the 70S ribosome it contacts the 23S rRNA (bridge B1a) and protein L5 of the 50S subunit (bridge B1b), connecting the 2 subunits; these bridges are implicated in subunit movement. Contacts the tRNAs in the A and P-sites. The sequence is that of Small ribosomal subunit protein uS13 from Methylibium petroleiphilum (strain ATCC BAA-1232 / LMG 22953 / PM1).